A 233-amino-acid polypeptide reads, in one-letter code: Large ribosomal subunit protein uL1 (233 aa).

It belongs to the universal ribosomal protein uL1 family. In terms of assembly, part of the 50S ribosomal subunit.

In terms of biological role, binds directly to 23S rRNA. The L1 stalk is quite mobile in the ribosome, and is involved in E site tRNA release. Its function is as follows. Protein L1 is also a translational repressor protein, it controls the translation of the L11 operon by binding to its mRNA. This Aeromonas salmonicida (strain A449) protein is Large ribosomal subunit protein uL1.